Consider the following 581-residue polypeptide: Arginine--tRNA ligase (581 aa).

The 'HIGH' region signature appears at 126 to 136; sequence PNLAKEMHVGH.

The protein belongs to the class-I aminoacyl-tRNA synthetase family. Monomer.

It is found in the cytoplasm. The enzyme catalyses tRNA(Arg) + L-arginine + ATP = L-arginyl-tRNA(Arg) + AMP + diphosphate. In Shewanella baltica (strain OS155 / ATCC BAA-1091), this protein is Arginine--tRNA ligase.